The primary structure comprises 225 residues: NAD(P)H-quinone oxidoreductase subunit K, chloroplastic (225 aa).

[4Fe-4S] cluster is bound by residues Cys-43, Cys-44, Cys-108, and Cys-139.

It belongs to the complex I 20 kDa subunit family. NDH is composed of at least 16 different subunits, 5 of which are encoded in the nucleus. The cofactor is [4Fe-4S] cluster.

It localises to the plastid. Its subcellular location is the chloroplast thylakoid membrane. It carries out the reaction a plastoquinone + NADH + (n+1) H(+)(in) = a plastoquinol + NAD(+) + n H(+)(out). The enzyme catalyses a plastoquinone + NADPH + (n+1) H(+)(in) = a plastoquinol + NADP(+) + n H(+)(out). Its function is as follows. NDH shuttles electrons from NAD(P)H:plastoquinone, via FMN and iron-sulfur (Fe-S) centers, to quinones in the photosynthetic chain and possibly in a chloroplast respiratory chain. The immediate electron acceptor for the enzyme in this species is believed to be plastoquinone. Couples the redox reaction to proton translocation, and thus conserves the redox energy in a proton gradient. The protein is NAD(P)H-quinone oxidoreductase subunit K, chloroplastic of Nasturtium officinale (Watercress).